A 170-amino-acid polypeptide reads, in one-letter code: Probable calcium-binding protein CML29 (170 aa).

3 consecutive EF-hand domains span residues 27–62 (SYISSLVEAFQAFDSDNDGLVTAPELRGLLASLGLD), 63–98 (KPEHEVRDMLARADADRDGKLSVEELLDVMNAGQLG), and 138–170 (ASVEDCMEIIACMDGDGDGAISVEEFRLMAQLL). Ca(2+) is bound by residues D40, D42, D44, E51, D76, D78, D80, K82, E87, D151, D153, D155, and E162.

Its function is as follows. Potential calcium sensor. This is Probable calcium-binding protein CML29 (CML29) from Oryza sativa subsp. japonica (Rice).